Reading from the N-terminus, the 335-residue chain is Probable tRNA N6-adenosine threonylcarbamoyltransferase (335 aa).

3 residues coordinate a divalent metal cation: His109, His113, and Tyr130. Substrate contacts are provided by residues 130–134 (YVSGG), Asp162, Gly177, Glu181, and Asn266. Position 294 (Asp294) interacts with a divalent metal cation.

The protein belongs to the KAE1 / TsaD family. In terms of assembly, component of the EKC/KEOPS complex; the whole complex dimerizes. A divalent metal cation is required as a cofactor.

The protein localises to the cytoplasm. The protein resides in the nucleus. The enzyme catalyses L-threonylcarbamoyladenylate + adenosine(37) in tRNA = N(6)-L-threonylcarbamoyladenosine(37) in tRNA + AMP + H(+). Functionally, component of the EKC/KEOPS complex that is required for the formation of a threonylcarbamoyl group on adenosine at position 37 (t(6)A37) in tRNAs that read codons beginning with adenine. The complex is probably involved in the transfer of the threonylcarbamoyl moiety of threonylcarbamoyl-AMP (TC-AMP) to the N6 group of A37. Osgep likely plays a direct catalytic role in this reaction, but requires other protein(s) of the complex to fulfill this activity. The polypeptide is Probable tRNA N6-adenosine threonylcarbamoyltransferase (Nematostella vectensis (Starlet sea anemone)).